The following is a 92-amino-acid chain: Small ribosomal subunit protein uS19 (92 aa).

It belongs to the universal ribosomal protein uS19 family.

Functionally, protein S19 forms a complex with S13 that binds strongly to the 16S ribosomal RNA. This is Small ribosomal subunit protein uS19 from Pectobacterium atrosepticum (strain SCRI 1043 / ATCC BAA-672) (Erwinia carotovora subsp. atroseptica).